Reading from the N-terminus, the 339-residue chain is Phosphate acyltransferase (339 aa).

The protein belongs to the PlsX family. In terms of assembly, homodimer. Probably interacts with PlsY.

The protein resides in the cytoplasm. It carries out the reaction a fatty acyl-[ACP] + phosphate = an acyl phosphate + holo-[ACP]. It functions in the pathway lipid metabolism; phospholipid metabolism. In terms of biological role, catalyzes the reversible formation of acyl-phosphate (acyl-PO(4)) from acyl-[acyl-carrier-protein] (acyl-ACP). This enzyme utilizes acyl-ACP as fatty acyl donor, but not acyl-CoA. The chain is Phosphate acyltransferase from Brachyspira hyodysenteriae (strain ATCC 49526 / WA1).